We begin with the raw amino-acid sequence, 1755 residues long: Transposon Ty1-DR1 Gag-Pol polyprotein (1755 aa).

Composition is skewed to polar residues over residues 1 to 10, 48 to 60, and 127 to 152; these read MESQQLSNYP, TKANSQQTTTPAS, and QSQFPQYPSSVGTPLSTPSPESGNTF. Disordered regions lie at residues 1 to 93, 126 to 173, and 352 to 421; these read MESQ…MMTQ, PQSQ…RPPP, and GSRN…SKST. Residues 153–165 show a composition bias toward low complexity; sequence TDSSSADSDMTST. The tract at residues 299-401 is RNA-binding; sequence NNGIHINNKV…NSKSKTARAH (103 aa). The span at 402 to 418 shows a compositional bias: low complexity; the sequence is NVSTSNNSPSTDNDSIS. S416 is modified (phosphoserine). Residue D461 is the For protease activity; shared with dimeric partner of the active site. The interval 583–640 is integrase-type zinc finger-like; that stretch reads NVHTSESTRKYPYPFIHRMLAHANAQTIRYSLKNNTITYFNESDVDWSSAIDYQCPDC. Residues 660-835 enclose the Integrase catalytic domain; the sequence is NSYEPFQYLH…AGLDISTLLP (176 aa). Mg(2+) is bound by residues D671 and D736. Disordered regions lie at residues 956–1087, 1092–1111, and 1130–1187; these read SKAV…ETEK, RSPSIDASPPENNSSHNIVP, and DLPL…DNET. Residues 960 to 969 are compositionally biased toward low complexity; the sequence is SPTDSTPPST. Positions 1005-1015 are enriched in polar residues; that stretch reads STPQISNIEST. The segment covering 1038–1053 has biased composition (basic and acidic residues); sequence ESSHASKSKDFRHSDS. Polar residues-rich tracts occupy residues 1054-1082 and 1101-1111; these read YSENETNHTNVPISSTGGTNNKTVPQISD and PENNSSHNIVP. Positions 1178–1212 match the Bipartite nuclear localization signal motif; the sequence is KKRSLEDNETEIKVSRDTWNTKNMRSLEPPRSKKR. The Reverse transcriptase Ty1/copia-type domain maps to 1338–1476; that stretch reads NNYYITQLDI…DILGLEIKYQ (139 aa). D1346, D1427, D1428, D1610, E1652, and D1685 together coordinate Mg(2+). The RNase H Ty1/copia-type domain maps to 1610-1752; it reads DASYGNQPYY…IKTFKLLTNK (143 aa).

The capsid protein forms a homotrimer, from which the VLPs are assembled. The protease is a homodimer, whose active site consists of two apposed aspartic acid residues. Initially, virus-like particles (VLPs) are composed of the structural unprocessed proteins Gag and Gag-Pol, and also contain the host initiator methionine tRNA (tRNA(i)-Met) which serves as a primer for minus-strand DNA synthesis, and a dimer of genomic Ty RNA. Processing of the polyproteins occurs within the particle and proceeds by an ordered pathway, called maturation. First, the protease (PR) is released by autocatalytic cleavage of the Gag-Pol polyprotein yielding capsid protein p45 and a Pol-p154 precursor protein. This cleavage is a prerequisite for subsequent processing of Pol-p154 at the remaining sites to release the mature structural and catalytic proteins. Maturation takes place prior to the RT reaction and is required to produce transposition-competent VLPs.

It is found in the cytoplasm. The protein resides in the nucleus. It catalyses the reaction DNA(n) + a 2'-deoxyribonucleoside 5'-triphosphate = DNA(n+1) + diphosphate. The catalysed reaction is Endonucleolytic cleavage to 5'-phosphomonoester.. Functionally, capsid protein (CA) is the structural component of the virus-like particle (VLP), forming the shell that encapsulates the retrotransposons dimeric RNA genome. The particles are assembled from trimer-clustered units and there are holes in the capsid shells that allow for the diffusion of macromolecules. CA also has nucleocapsid-like chaperone activity, promoting primer tRNA(i)-Met annealing to the multipartite primer-binding site (PBS), dimerization of Ty1 RNA and initiation of reverse transcription. Its function is as follows. The aspartyl protease (PR) mediates the proteolytic cleavages of the Gag and Gag-Pol polyproteins after assembly of the VLP. In terms of biological role, reverse transcriptase/ribonuclease H (RT) is a multifunctional enzyme that catalyzes the conversion of the retro-elements RNA genome into dsDNA within the VLP. The enzyme displays a DNA polymerase activity that can copy either DNA or RNA templates, and a ribonuclease H (RNase H) activity that cleaves the RNA strand of RNA-DNA heteroduplexes during plus-strand synthesis and hydrolyzes RNA primers. The conversion leads to a linear dsDNA copy of the retrotransposon that includes long terminal repeats (LTRs) at both ends. Integrase (IN) targets the VLP to the nucleus, where a subparticle preintegration complex (PIC) containing at least integrase and the newly synthesized dsDNA copy of the retrotransposon must transit the nuclear membrane. Once in the nucleus, integrase performs the integration of the dsDNA into the host genome. This is Transposon Ty1-DR1 Gag-Pol polyprotein (TY1B-DR1) from Saccharomyces cerevisiae (strain ATCC 204508 / S288c) (Baker's yeast).